The primary structure comprises 461 residues: Cysteine--tRNA ligase (461 aa).

Cys29 contacts Zn(2+). The short motif at 31–41 (MTIYDLCHVGH) is the 'HIGH' region element. Zn(2+) contacts are provided by Cys213, His238, and Glu242. The 'KMSKS' region motif lies at 274-278 (KMSKS). An ATP-binding site is contributed by Lys277.

This sequence belongs to the class-I aminoacyl-tRNA synthetase family. In terms of assembly, monomer. The cofactor is Zn(2+).

It localises to the cytoplasm. It carries out the reaction tRNA(Cys) + L-cysteine + ATP = L-cysteinyl-tRNA(Cys) + AMP + diphosphate. The sequence is that of Cysteine--tRNA ligase from Methylibium petroleiphilum (strain ATCC BAA-1232 / LMG 22953 / PM1).